The chain runs to 209 residues: MKTGESTAIDIAPETNNSGPIGKKKSTTPLLAAPVPDRGTHRMKRGLAIFDFVLRIGVLASALAAAAAMGTSEQTLPFFTQFFQFEASYDDLPTFQFFVVAMAVVAGYVVLSIPFSIVCIIRPHAAGPRVLLLILDSVALTLNTAAAGAAAAVVSLAHSGNSSTNWLAICNQFGDFCQQASGAVVGSFAAVLLFLLLILFSALSLKNSH.

Residues methionine 1–valine 35 form a disordered region. Topologically, residues methionine 1 to glycine 46 are cytoplasmic. The chain crosses the membrane as a helical span at residues leucine 47–alanine 67. The Extracellular segment spans residues alanine 68–glutamine 96. A helical membrane pass occupies residues phenylalanine 97–isoleucine 117. Residues valine 118–arginine 129 lie on the Cytoplasmic side of the membrane. Residues valine 130–alanine 150 traverse the membrane as a helical segment. The Extracellular portion of the chain corresponds to alanine 151 to glycine 182. A glycan (N-linked (GlcNAc...) asparagine) is linked at asparagine 161. Residues alanine 183–leucine 203 form a helical membrane-spanning segment. The Cytoplasmic segment spans residues serine 204–histidine 209.

It belongs to the Casparian strip membrane proteins (CASP) family. In terms of assembly, homodimer and heterodimers.

It localises to the cell membrane. Its function is as follows. Regulates membrane-cell wall junctions and localized cell wall deposition. Required for establishment of the Casparian strip membrane domain (CSD) and the subsequent formation of Casparian strips, a cell wall modification of the root endodermis that determines an apoplastic barrier between the intraorganismal apoplasm and the extraorganismal apoplasm and prevents lateral diffusion. The protein is Casparian strip membrane protein 1 of Cucumis melo (Muskmelon).